We begin with the raw amino-acid sequence, 253 residues long: Large ribosomal subunit protein bL28m (253 aa).

A mitochondrion-targeting transit peptide spans 1 to 55; sequence MPLHKYPPALWDVLKLKDGIYARLPEHYRRSLLEKHKPYPVHWKPHGLKYRLNPK.

It belongs to the bacterial ribosomal protein bL28 family. As to quaternary structure, component of the mitochondrial ribosome large subunit (39S) which comprises a 16S rRNA and about 50 distinct proteins.

The protein localises to the mitochondrion. The protein is Large ribosomal subunit protein bL28m (mrpl28) of Xenopus laevis (African clawed frog).